A 215-amino-acid chain; its full sequence is MFITFEGMEGSGKSTALNRVQQVLLDAGHGVLLTREPGGSRLGRTLRSILLDLSNDDIVPEAELFLYLADRAQHVGQVIRPALDEGVVVLSDRYADSTVVYQGYGRGLDPERLRELNDMAVGGLWPDLTLVFDLPPEEGLRRAMTRNLREGTSVSEGRFEAEHLAFHARVREGYLTWAALHPARFRVVDATRTPDEVFEDVMRAVRSVLSAPARP.

7–14 is an ATP binding site; sequence GMEGSGKS.

It belongs to the thymidylate kinase family.

It carries out the reaction dTMP + ATP = dTDP + ADP. In terms of biological role, phosphorylation of dTMP to form dTDP in both de novo and salvage pathways of dTTP synthesis. This Nitratidesulfovibrio vulgaris (strain DSM 19637 / Miyazaki F) (Desulfovibrio vulgaris) protein is Thymidylate kinase.